The following is a 533-amino-acid chain: Dipeptide-binding protein (533 aa).

Positions 1 to 24 (MRKILPLRAWLAAGLILGSPFSHA) are cleaved as a signal peptide.

The protein belongs to the bacterial solute-binding protein 5 family.

Its subcellular location is the periplasm. Binds different dipeptides. Probably bind only L-amino acid containing dipeptides. In Pseudomonas aeruginosa (strain ATCC 15692 / DSM 22644 / CIP 104116 / JCM 14847 / LMG 12228 / 1C / PRS 101 / PAO1), this protein is Dipeptide-binding protein.